The primary structure comprises 310 residues: Malate dehydrogenase (310 aa).

NAD(+) is bound by residues 7–12 and Asp-32; that span reads GAGNVG. Positions 81 and 87 each coordinate substrate. Residues Asn-94 and 117-119 contribute to the NAD(+) site; that span reads VSN. Substrate contacts are provided by Asn-119 and Arg-150. His-174 acts as the Proton acceptor in catalysis.

Belongs to the LDH/MDH superfamily. MDH type 3 family.

The catalysed reaction is (S)-malate + NAD(+) = oxaloacetate + NADH + H(+). In terms of biological role, catalyzes the reversible oxidation of malate to oxaloacetate. The sequence is that of Malate dehydrogenase from Pelodictyon phaeoclathratiforme (strain DSM 5477 / BU-1).